The primary structure comprises 379 residues: Acetylajmalan esterase 1 (379 aa).

Residues 1 to 20 (MGFAPLLVFSLFVFAGTTKG) form the signal peptide. Ser34 acts as the Nucleophile in catalysis. Asn96, Asn178, Asn197, and Asn291 each carry an N-linked (GlcNAc...) asparagine glycan. Catalysis depends on residues Asp332 and His335.

The protein belongs to the 'GDSL' lipolytic enzyme family. As to expression, expressed in roots and leaves at low levels.

It catalyses the reaction 17-O-acetylnorajmaline + H2O = norajmaline + acetate + H(+). The enzyme catalyses 17-O-acetylajmaline + H2O = ajmaline + acetate + H(+). It functions in the pathway alkaloid biosynthesis; ajmaline biosynthesis. Functionally, acetylesterase involved in the biosynthesis of ajmaline-type monoterpenoid indole alkaloids (MIAs) natural products, important plant-derived pharmaceuticals used in the therapy of heart disorders. Deacetylates 17-O-acetylnorajmaline to produce norajmaline. May also catalyze the conversion of 17-O-acetylajmaline to ajmaline. The sequence is that of Acetylajmalan esterase 1 from Rauvolfia serpentina (Serpentine wood).